The primary structure comprises 324 residues: Glutathione synthetase (324 aa).

The 186-residue stretch at 124–309 (KLAIAQFREF…VAGMFIDALE (186 aa)) folds into the ATP-grasp domain. 150-206 (HAEQGDVIFKPLDGMGGAGIFRVGADGMNLGSVIETLTHNGTRTVMAQQYIPAIRDG) contributes to the ATP binding site. Mg(2+) is bound by residues glutamate 280 and asparagine 282.

Belongs to the prokaryotic GSH synthase family. Mg(2+) serves as cofactor. It depends on Mn(2+) as a cofactor.

The enzyme catalyses gamma-L-glutamyl-L-cysteine + glycine + ATP = glutathione + ADP + phosphate + H(+). It functions in the pathway sulfur metabolism; glutathione biosynthesis; glutathione from L-cysteine and L-glutamate: step 2/2. This chain is Glutathione synthetase, found in Ralstonia nicotianae (strain ATCC BAA-1114 / GMI1000) (Ralstonia solanacearum).